The following is a 325-amino-acid chain: MGIFPGIILIFLRVKFATAAVIVSGHQKSTTVSHEMSGLNWKPFVYGGLASIVAEFGTFPVDLTKTRLQVQGQSIDARFKEIKYRGMFHALFRICKEEGVLALYSGIAPALLRQASYGTIKIGIYQSLKRLFVERLEDETLLINMICGVVSGVISSTIANPTDVLKIRMQAQGSLFQGSMIGSFIDIYQQEGTRGLWRGVVPTAQRAAIVVGVELPVYDITKKHLILSGMMGDTILTHFVSSFTCGLAGALASNPVDVVRTRMMNQRAIVGHVDLYKGTVDGILKMWKHEGFFALYKGFWPNWLRLGPWNIIFFITYEQLKRLQI.

6 consecutive transmembrane segments (helical) span residues 38-54 (GLNW…SIVA), 112-128 (LRQA…YQSL), 141-161 (LLIN…IANP), 199-215 (GVVP…GVEL), 240-256 (VSSF…SNPV), and 298-315 (GFWP…IFFI). Solcar repeat units follow at residues 42 to 131 (KPFV…LKRL), 139 to 224 (ETLL…TKKH), and 233 to 323 (DTIL…LKRL).

It belongs to the mitochondrial carrier (TC 2.A.29) family. Homotetramer. Mainly expressed in brain. Some expression in testis and pituitary.

Its subcellular location is the mitochondrion inner membrane. The catalysed reaction is sulfite(in) + sulfate(out) = sulfite(out) + sulfate(in). The enzyme catalyses thiosulfate(in) + sulfate(out) = thiosulfate(out) + sulfate(in). It carries out the reaction sulfate(out) + phosphate(in) = sulfate(in) + phosphate(out). It catalyses the reaction oxalate(in) + sulfate(out) = oxalate(out) + sulfate(in). The catalysed reaction is malonate(in) + sulfate(out) = malonate(out) + sulfate(in). The enzyme catalyses maleate(in) + sulfate(out) = maleate(out) + sulfate(in). It carries out the reaction (S)-malate(in) + sulfate(out) = (S)-malate(out) + sulfate(in). It catalyses the reaction (3S)-citramalate(in) + sulfate(out) = (3S)-citramalate(out) + sulfate(in). The catalysed reaction is (3R)-citramalate(in) + sulfate(out) = (3R)-citramalate(out) + sulfate(in). The enzyme catalyses sulfate(out) + succinate(in) = sulfate(in) + succinate(out). It carries out the reaction (S,S)-tartrate(in) + sulfate(out) = (S,S)-tartrate(out) + sulfate(in). It catalyses the reaction (2R,3R)-tartrate(in) + sulfate(out) = (2R,3R)-tartrate(out) + sulfate(in). The catalysed reaction is D-aspartate(in) + sulfate(out) = D-aspartate(out) + sulfate(in). The enzyme catalyses L-aspartate(in) + sulfate(out) = L-aspartate(out) + sulfate(in). It carries out the reaction sulfate(in) = sulfate(out). It catalyses the reaction phosphate(in) = phosphate(out). The catalysed reaction is (S)-malate(out) = (S)-malate(in). The enzyme catalyses citrate(in) = citrate(out). It carries out the reaction L-aspartate(out) = L-aspartate(in). It catalyses the reaction L-glutamate(out) = L-glutamate(in). The catalysed reaction is H(+)(in) = H(+)(out). The enzyme catalyses chloride(in) = chloride(out). With respect to regulation, increased activity at pH lower than 8.0. sulfate/sulfate exchange activity is inhibited strongly by pyridoxal 5'-phosphate, bathophenanthroline and the organic mercurials mersalyl, p-chloromercuribenzoate and HgCl2. Proton conductance is activated by cardiolipin and long-chain free fatty acids and inhibited by purine nucleotides ATP and ADP. Chloride ion transporter activity is inhibited by long-chain free fatty acids. Its function is as follows. Transports inorganic anions (sulfate, sulfite, thiosulfate and phosphate) and, to a lesser extent, a variety of dicarboxylates (e.g. malonate, malate and citramalate) and, even more so, aspartate and glutamate and tricarboxylates. May catalyze the export of sulfite and thiosulfate (the hydrogen sulfide degradation products) from the mitochondria, thereby modulating the level of the hydrogen sulfide. Also can mediate a very low unidirectional transport of anions including sulfate, phosphate, (S)-malate, citrate, L-aspartate and L-glutamate. Maintains oxidative balance (through uncoupling activities) and ATP production (by modifying mitochondrial membrane potential). Is able to transport protons across lipid membranes. Also exhibits transmembrane chloride transport activity to a lesser extent. May modify mitochondrial respiratory efficiency and mitochondrial oxidant production. In Homo sapiens (Human), this protein is Brain mitochondrial carrier protein 1.